Reading from the N-terminus, the 692-residue chain is Elongation factor G (692 aa).

The tr-type G domain occupies 8–282; that stretch reads EKTRNIGIMA…AVVEYMPAPT (275 aa). GTP-binding positions include 17-24, 81-85, and 135-138; these read AHIDAGKT, DTPGH, and NKMD. The segment at 285 to 304 is disordered; that stretch reads PNIKGVHPETGEADERHSSD. The segment covering 290–304 has biased composition (basic and acidic residues); it reads VHPETGEADERHSSD.

It belongs to the TRAFAC class translation factor GTPase superfamily. Classic translation factor GTPase family. EF-G/EF-2 subfamily.

Its subcellular location is the cytoplasm. In terms of biological role, catalyzes the GTP-dependent ribosomal translocation step during translation elongation. During this step, the ribosome changes from the pre-translocational (PRE) to the post-translocational (POST) state as the newly formed A-site-bound peptidyl-tRNA and P-site-bound deacylated tRNA move to the P and E sites, respectively. Catalyzes the coordinated movement of the two tRNA molecules, the mRNA and conformational changes in the ribosome. The protein is Elongation factor G of Desulfitobacterium hafniense (strain Y51).